The sequence spans 539 residues: O-phosphoserine--tRNA(Cys) ligase (539 aa).

Residues 188-190 (HMT), 233-235 (SAS), 275-276 (YY), and N327 contribute to the substrate site.

The protein belongs to the class-II aminoacyl-tRNA synthetase family. O-phosphoseryl-tRNA(Cys) synthetase subfamily. As to quaternary structure, homotetramer. Interacts with SepCysS.

The catalysed reaction is tRNA(Cys) + O-phospho-L-serine + ATP = O-phospho-L-seryl-tRNA(Cys) + AMP + diphosphate. Catalyzes the attachment of O-phosphoserine (Sep) to tRNA(Cys). The chain is O-phosphoserine--tRNA(Cys) ligase from Methanococcoides burtonii (strain DSM 6242 / NBRC 107633 / OCM 468 / ACE-M).